Reading from the N-terminus, the 295-residue chain is Phosphatidylserine decarboxylase proenzyme (295 aa).

Catalysis depends on charge relay system; for autoendoproteolytic cleavage activity residues D90 and S258. The Schiff-base intermediate with substrate; via pyruvic acid; for decarboxylase activity role is filled by S258. At S258 the chain carries Pyruvic acid (Ser); by autocatalysis.

The protein belongs to the phosphatidylserine decarboxylase family. PSD-B subfamily. Prokaryotic type I sub-subfamily. As to quaternary structure, heterodimer of a large membrane-associated beta subunit and a small pyruvoyl-containing alpha subunit. It depends on pyruvate as a cofactor. Post-translationally, is synthesized initially as an inactive proenzyme. Formation of the active enzyme involves a self-maturation process in which the active site pyruvoyl group is generated from an internal serine residue via an autocatalytic post-translational modification. Two non-identical subunits are generated from the proenzyme in this reaction, and the pyruvate is formed at the N-terminus of the alpha chain, which is derived from the carboxyl end of the proenzyme. The autoendoproteolytic cleavage occurs by a canonical serine protease mechanism, in which the side chain hydroxyl group of the serine supplies its oxygen atom to form the C-terminus of the beta chain, while the remainder of the serine residue undergoes an oxidative deamination to produce ammonia and the pyruvoyl prosthetic group on the alpha chain. During this reaction, the Ser that is part of the protease active site of the proenzyme becomes the pyruvoyl prosthetic group, which constitutes an essential element of the active site of the mature decarboxylase.

The protein resides in the cell membrane. It catalyses the reaction a 1,2-diacyl-sn-glycero-3-phospho-L-serine + H(+) = a 1,2-diacyl-sn-glycero-3-phosphoethanolamine + CO2. It functions in the pathway phospholipid metabolism; phosphatidylethanolamine biosynthesis; phosphatidylethanolamine from CDP-diacylglycerol: step 2/2. Functionally, catalyzes the formation of phosphatidylethanolamine (PtdEtn) from phosphatidylserine (PtdSer). This is Phosphatidylserine decarboxylase proenzyme from Blochmanniella pennsylvanica (strain BPEN).